The sequence spans 98 residues: NADH-ubiquinone oxidoreductase chain 4L (98 aa).

3 helical membrane passes run 1 to 21 (MLPI…GVLI), 29 to 49 (TLLC…LMIT), and 59 to 79 (IPLI…ALLV).

The protein belongs to the complex I subunit 4L family. As to quaternary structure, core subunit of respiratory chain NADH dehydrogenase (Complex I) which is composed of 45 different subunits.

The protein resides in the mitochondrion inner membrane. It carries out the reaction a ubiquinone + NADH + 5 H(+)(in) = a ubiquinol + NAD(+) + 4 H(+)(out). Core subunit of the mitochondrial membrane respiratory chain NADH dehydrogenase (Complex I) which catalyzes electron transfer from NADH through the respiratory chain, using ubiquinone as an electron acceptor. Part of the enzyme membrane arm which is embedded in the lipid bilayer and involved in proton translocation. This chain is NADH-ubiquinone oxidoreductase chain 4L (MT-ND4L), found in Phascogale tapoatafa (Common wambenger).